A 125-amino-acid polypeptide reads, in one-letter code: Multifunctional methyltransferase subunit TRM112-like protein (125 aa).

The 118-residue stretch at 2–119 (RLLTHNLLSS…SRGIPNMLLS (118 aa)) folds into the TRM112 domain. The residue at position 119 (Ser119) is a Phosphoserine.

This sequence belongs to the TRM112 family. As to quaternary structure, part of the heterodimeric BUD23-TRM112 methyltransferase complex; this heterodimerization is necessary for the metabolic stability and activity of the catalytic subunit BUD23. Part of the heterodimeric N6AMT1-TRM112 methyltransferase complex; this heterodimerization is necessary for S-adenosyl-L-methionine-binding to N6AMT1/HEMK2. Part of the heterodimeric ALKBH8-TRM112 methyltransferase complex. Part of the heterodimeric METTL5-TRM112 methyltransferase complex; this heterodimerization is necessary for the stability of the catalytic subunit METTL5. Part of the heterodimeric THUMPD3-TRM112 methyltransferase complex; this complex forms an active tRNA methyltransferase, where TRMT112 acts as an activator of the catalytic subunit THUMPD3. Part of the heterodimeric THUMPD2-TRM112 methyltransferase complex; this complex forms an active tRNA methyltransferase, where TRMT112 acts as an activator of the catalytic subunit THUMPD2. Part of the heterodimeric TRMT11-TRM112 methyltransferase complex; this complex forms an active tRNA methyltransferase, where TRMT112 acts as an activator of the catalytic subunit TRMT11.

The protein localises to the nucleus. Its subcellular location is the nucleoplasm. It localises to the cytoplasm. It is found in the perinuclear region. In terms of biological role, acts as an activator of both rRNA/tRNA and protein methyltransferases. Together with methyltransferase BUD23, methylates the N(7) position of a guanine in 18S rRNA. The heterodimer with HEMK2/N6AMT1 catalyzes N5-methylation of ETF1 on 'Gln-185', using S-adenosyl L-methionine as methyl donor. The heterodimer with ALKBH8 catalyzes the methylation of 5-carboxymethyl uridine to 5-methylcarboxymethyl uridine at the wobble position of the anticodon loop in target tRNA species. Together with methyltransferase THUMPD3, catalyzes the formation of N(2)-methylguanosine at position 6 in a broad range of tRNA substrates and at position 7 of tRNA(Trp). Involved in the pre-rRNA processing steps leading to small-subunit rRNA production. Together with methyltransferase METTL5, specifically methylates the 6th position of adenine in position 1832 of 18S rRNA. This chain is Multifunctional methyltransferase subunit TRM112-like protein (TRMT112), found in Bos taurus (Bovine).